The sequence spans 314 residues: Cathepsin L 1 (314 aa).

A signal peptide spans 1–24 (MMLLGASLYLNNTQEVSDEIDTAN). Positions 25–109 (LYANWKMKYN…NAANSNFQYK (85 aa)) are cleaved as a propeptide — activation peptide. Intrachain disulfides connect C132/C175, C166/C207, and C259/C302. Residue C135 is part of the active site. Residues H265 and N282 contribute to the active site.

The protein belongs to the peptidase C1 family.

The protein localises to the secreted. The catalysed reaction is Specificity close to that of papain. As compared to cathepsin B, cathepsin L exhibits higher activity toward protein substrates, but has little activity on Z-Arg-Arg-NHMec, and no peptidyl-dipeptidase activity.. Functionally, may be involved in extracellular digestion. This Paramecium tetraurelia protein is Cathepsin L 1.